A 260-amino-acid polypeptide reads, in one-letter code: Adenosylcobinamide-GDP ribazoletransferase (260 aa).

6 helical membrane-spanning segments follow: residues 40-60 (AFPF…LLLL), 64-84 (ADPL…TGAL), 117-137 (YGAI…AVIA), 142-162 (PLTA…AIAW), 188-208 (QFAL…AFGL), and 209-229 (RPLV…TAFI).

This sequence belongs to the CobS family. It depends on Mg(2+) as a cofactor.

The protein localises to the cell inner membrane. The enzyme catalyses alpha-ribazole + adenosylcob(III)inamide-GDP = adenosylcob(III)alamin + GMP + H(+). It catalyses the reaction alpha-ribazole 5'-phosphate + adenosylcob(III)inamide-GDP = adenosylcob(III)alamin 5'-phosphate + GMP + H(+). It participates in cofactor biosynthesis; adenosylcobalamin biosynthesis; adenosylcobalamin from cob(II)yrinate a,c-diamide: step 7/7. Its function is as follows. Joins adenosylcobinamide-GDP and alpha-ribazole to generate adenosylcobalamin (Ado-cobalamin). Also synthesizes adenosylcobalamin 5'-phosphate from adenosylcobinamide-GDP and alpha-ribazole 5'-phosphate. The protein is Adenosylcobinamide-GDP ribazoletransferase of Rhizobium johnstonii (strain DSM 114642 / LMG 32736 / 3841) (Rhizobium leguminosarum bv. viciae).